Consider the following 432-residue polypeptide: Meiotically up-regulated gene 134 protein (432 aa).

It belongs to the UPF0300 family.

Its subcellular location is the cytoplasm. The protein localises to the cell cortex. In terms of biological role, has a role in meiosis. The polypeptide is Meiotically up-regulated gene 134 protein (mug134) (Schizosaccharomyces pombe (strain 972 / ATCC 24843) (Fission yeast)).